The following is a 197-amino-acid chain: Prefoldin subunit 3 (197 aa).

A2 carries the N-acetylalanine modification. K59 carries the N6-acetyllysine modification.

Belongs to the prefoldin subunit alpha family. In terms of assembly, heterohexamer of two PFD-alpha type and four PFD-beta type subunits. Binds to the C-terminal part of VHL. As to expression, ubiquitous.

The protein resides in the cytoplasm. The protein localises to the nucleus. Its function is as follows. Binds specifically to cytosolic chaperonin (c-CPN) and transfers target proteins to it. Binds to nascent polypeptide chain and promotes folding in an environment in which there are many competing pathways for nonnative proteins. This chain is Prefoldin subunit 3 (VBP1), found in Homo sapiens (Human).